We begin with the raw amino-acid sequence, 191 residues long: dCTP deaminase, dUMP-forming (191 aa).

DCTP contacts are provided by residues 101–106 (KSSLGR), Asp-119, 127–129 (TLE), Gln-148, Tyr-162, and Gln-174. Glu-129 acts as the Proton donor/acceptor in catalysis. The interval 163–191 (GSPVYGSRYQGQRGPTPSRSWQNFHRTKI) is disordered. Polar residues predominate over residues 171–191 (YQGQRGPTPSRSWQNFHRTKI).

This sequence belongs to the dCTP deaminase family. In terms of assembly, homotrimer.

It carries out the reaction dCTP + 2 H2O = dUMP + NH4(+) + diphosphate. It participates in pyrimidine metabolism; dUMP biosynthesis; dUMP from dCTP: step 1/1. Bifunctional enzyme that catalyzes both the deamination of dCTP to dUTP and the hydrolysis of dUTP to dUMP without releasing the toxic dUTP intermediate. In Acidothermus cellulolyticus (strain ATCC 43068 / DSM 8971 / 11B), this protein is dCTP deaminase, dUMP-forming.